A 259-amino-acid chain; its full sequence is Phosphate import ATP-binding protein PstB 1 (259 aa).

The 242-residue stretch at I13–I254 folds into the ABC transporter domain. G45–S52 is a binding site for ATP.

This sequence belongs to the ABC transporter superfamily. Phosphate importer (TC 3.A.1.7) family. In terms of assembly, the complex is composed of two ATP-binding proteins (PstB), two transmembrane proteins (PstC and PstA) and a solute-binding protein (PstS).

The protein localises to the cell inner membrane. The enzyme catalyses phosphate(out) + ATP + H2O = ADP + 2 phosphate(in) + H(+). Part of the ABC transporter complex PstSACB involved in phosphate import. Responsible for energy coupling to the transport system. This Pseudomonas savastanoi pv. phaseolicola (strain 1448A / Race 6) (Pseudomonas syringae pv. phaseolicola (strain 1448A / Race 6)) protein is Phosphate import ATP-binding protein PstB 1.